The following is an 86-amino-acid chain: Small muscular protein (86 aa).

The disordered stretch occupies residues 20–64 (MGAFRPGAGQPPRKKECTPETEEAVLPTSDEEKKPIPGAKKLPGP).

The protein belongs to the SMPX family. High level of expression found in the heart and skeletal muscle, a very low expression in the lung and spleen and no expression found in the liver, kidney, fat and brain.

In terms of biological role, plays a role in the regulatory network through which muscle cells coordinate their structural and functional states during growth, adaptation, and repair. This Sus scrofa (Pig) protein is Small muscular protein (SMPX).